The following is a 591-amino-acid chain: CTP synthase 1 (591 aa).

The 255-residue stretch at 300-554 (SIALVGKYTK…LAAAGRLQSY (255 aa)) folds into the Glutamine amidotransferase type-1 domain. Catalysis depends on for GATase activity residues C399, H526, and E528. A phosphoserine mark is found at S571 and S575.

The protein belongs to the CTP synthase family.

It catalyses the reaction UTP + L-glutamine + ATP + H2O = CTP + L-glutamate + ADP + phosphate + 2 H(+). The protein operates within pyrimidine metabolism; CTP biosynthesis via de novo pathway; CTP from UDP: step 2/2. Its function is as follows. This enzyme is involved in the de novo synthesis of CTP, a precursor of DNA, RNA and phospholipids. Catalyzes the ATP-dependent amination of UTP to CTP with either L-glutamine or ammonia as a source of nitrogen. This is CTP synthase 1 (ctps1) from Danio rerio (Zebrafish).